A 250-amino-acid chain; its full sequence is Cytochrome c oxidase subunit 2 (250 aa).

The Mitochondrial intermembrane portion of the chain corresponds to 1–27; that stretch reads MGLLFNNLIMNFDAPSPWGIYFQDSAT. The chain crosses the membrane as a helical span at residues 28–61; that stretch reads PQMEGLVELHDNIMYYLVVILFGVGWILLSIIRN. The Mitochondrial matrix segment spans residues 62–77; the sequence is YISTKSPISHKYLNHG. A helical membrane pass occupies residues 78 to 107; the sequence is TLIELIWTITPAVILILIAFPSFKLLYLMD. Over 108-250 the chain is Mitochondrial intermembrane; that stretch reads EVSDPSMSVL…EKFLTWLEEQ (143 aa). Cu cation is bound by residues His-185, Cys-220, Glu-222, Cys-224, His-228, and Met-231. Glu-222 lines the Mg(2+) pocket.

Belongs to the cytochrome c oxidase subunit 2 family. In terms of assembly, component of the cytochrome c oxidase (complex IV, CIV), a multisubunit enzyme composed of 11 subunits. The complex is composed of a catalytic core of 3 subunits Cox1, Cox2 and Cox3, encoded in the mitochondrial DNA, and 8 supernumerary subunits Cox4, Cox5a/Cox5, Cox6, Cox7, Cox8, Cox7a/Cox9, Cox6b/Cox12 and Cox6a/Cox13, which are encoded in the nuclear genome. The complex exists as a monomer or a dimer and forms respiratory supercomplexes (SCs) in the inner mitochondrial membrane with NADH-ubiquinone oxidoreductase (complex I, CI) and ubiquinol-cytochrome c oxidoreductase (cytochrome b-c1 complex, complex III, CIII), resulting in various different assemblies (supercomplexes I(1)IV(1), I(1)III(3)IV(2), III(2)IV(1) and III(2)IV(2) as well as larger supercomplexes of compositions like I(1)III(2)IV(5-6)). Cu cation serves as cofactor.

It localises to the mitochondrion inner membrane. It carries out the reaction 4 Fe(II)-[cytochrome c] + O2 + 8 H(+)(in) = 4 Fe(III)-[cytochrome c] + 2 H2O + 4 H(+)(out). Functionally, component of the cytochrome c oxidase, the last enzyme in the mitochondrial electron transport chain which drives oxidative phosphorylation. The respiratory chain contains 3 multisubunit complexes succinate dehydrogenase (complex II, CII), ubiquinol-cytochrome c oxidoreductase (cytochrome b-c1 complex, complex III, CIII) and cytochrome c oxidase (complex IV, CIV), that cooperate to transfer electrons derived from NADH and succinate to molecular oxygen, creating an electrochemical gradient over the inner membrane that drives transmembrane transport and the ATP synthase. Cytochrome c oxidase is the component of the respiratory chain that catalyzes the reduction of oxygen to water. Electrons originating from reduced cytochrome c in the intermembrane space (IMS) are transferred via the dinuclear copper A center (CU(A)) of Cox2 and heme A of Cox1 to the active site in Cox1, a binuclear center (BNC) formed by heme A3 and copper B (CU(B)). The BNC reduces molecular oxygen to 2 water molecules using 4 electrons from cytochrome c in the IMS and 4 protons from the mitochondrial matrix. The protein is Cytochrome c oxidase subunit 2 (cox-2) of Neurospora crassa (strain ATCC 24698 / 74-OR23-1A / CBS 708.71 / DSM 1257 / FGSC 987).